The chain runs to 332 residues: Ribosomal RNA small subunit methyltransferase H (332 aa).

Residues 39–41, aspartate 56, phenylalanine 83, aspartate 100, and glutamine 107 each bind S-adenosyl-L-methionine; that span reads GGY.

Belongs to the methyltransferase superfamily. RsmH family.

It is found in the cytoplasm. It carries out the reaction cytidine(1402) in 16S rRNA + S-adenosyl-L-methionine = N(4)-methylcytidine(1402) in 16S rRNA + S-adenosyl-L-homocysteine + H(+). In terms of biological role, specifically methylates the N4 position of cytidine in position 1402 (C1402) of 16S rRNA. This is Ribosomal RNA small subunit methyltransferase H from Bartonella quintana (strain Toulouse) (Rochalimaea quintana).